The following is a 207-amino-acid chain: Urease accessory protein UreG (207 aa).

14 to 21 (GPVGSGKT) serves as a coordination point for GTP.

It belongs to the SIMIBI class G3E GTPase family. UreG subfamily. Homodimer. UreD, UreF and UreG form a complex that acts as a GTP-hydrolysis-dependent molecular chaperone, activating the urease apoprotein by helping to assemble the nickel containing metallocenter of UreC. The UreE protein probably delivers the nickel.

The protein localises to the cytoplasm. Functionally, facilitates the functional incorporation of the urease nickel metallocenter. This process requires GTP hydrolysis, probably effectuated by UreG. This is Urease accessory protein UreG from Chelativorans sp. (strain BNC1).